The sequence spans 406 residues: Serine/threonine transporter SstT (406 aa).

The next 9 helical transmembrane spans lie at 21-41, 45-65, 79-99, 138-158, 179-199, 213-233, 285-305, 313-333, and 360-380; these read LIIGIMLALWIPDIAAPVAIL, FVGALKAVAPVLVLILVMGAI, ILILYLLGTFLAGVTAVIASF, ALMNANYIGILSWAILLGLAL, VVKWVINLAPLGILGLVFDSI, LLLLLVGCMVFVALIINPLIV, ISIPLGATINMAGAAVTIAVL, LGITVDIPTAIILSVLSAIAA, and IAMQVVGVGFIIGVVQDSCET.

This sequence belongs to the dicarboxylate/amino acid:cation symporter (DAACS) (TC 2.A.23) family.

The protein resides in the cell membrane. The enzyme catalyses L-serine(in) + Na(+)(in) = L-serine(out) + Na(+)(out). It catalyses the reaction L-threonine(in) + Na(+)(in) = L-threonine(out) + Na(+)(out). Involved in the import of serine and threonine into the cell, with the concomitant import of sodium (symport system). The polypeptide is Serine/threonine transporter SstT (Desulfitobacterium hafniense (strain Y51)).